Here is a 561-residue protein sequence, read N- to C-terminus: Putative transport protein YbjL (561 aa).

5 helical membrane-spanning segments follow: residues 8-28 (LLNG…LCLG), 32-52 (LGSV…LLGQ), 66-86 (FMLF…SIFF), 94-114 (MLAL…GKLF), and 158-178 (NLSL…IVGA). RCK C-terminal domains lie at 200–288 (RGLD…SFRN) and 292–373 (VFDR…RIGF). Helical transmembrane passes span 383–403 (LLAF…TFQF), 406–426 (FSFG…LGFL), 447–467 (FGLM…ISNG), 475–495 (MLIA…LFGA), and 540–560 (AIAN…WPGL).

Belongs to the AAE transporter (TC 2.A.81) family. YbjL subfamily.

It is found in the cell membrane. The sequence is that of Putative transport protein YbjL from Salmonella typhi.